Consider the following 63-residue polypeptide: Large ribosomal subunit protein bL28 (63 aa).

This sequence belongs to the bacterial ribosomal protein bL28 family.

The chain is Large ribosomal subunit protein bL28 from Solibacter usitatus (strain Ellin6076).